A 128-amino-acid polypeptide reads, in one-letter code: L-ectoine synthase (128 aa).

This sequence belongs to the ectoine synthase family.

The enzyme catalyses (2S)-4-acetamido-2-aminobutanoate = L-ectoine + H2O. It participates in amine and polyamine biosynthesis; ectoine biosynthesis; L-ectoine from L-aspartate 4-semialdehyde: step 3/3. In terms of biological role, catalyzes the circularization of gamma-N-acetyl-alpha,gamma-diaminobutyric acid (ADABA) to ectoine (1,4,5,6-tetrahydro-2-methyl-4-pyrimidine carboxylic acid), which is an excellent osmoprotectant. This is L-ectoine synthase from Oceanobacillus iheyensis (strain DSM 14371 / CIP 107618 / JCM 11309 / KCTC 3954 / HTE831).